The following is a 503-amino-acid chain: Catalase (503 aa).

The first 21 residues, 1-21 (MHMSKSFLIISMGFVAVSVQA), serve as a signal peptide directing secretion. Residues His72 and Asn145 contribute to the active site. Residue Tyr353 coordinates heme.

Belongs to the catalase family. Requires heme as cofactor.

Its subcellular location is the periplasm. It carries out the reaction 2 H2O2 = O2 + 2 H2O. In terms of biological role, decomposes hydrogen peroxide into water and oxygen; serves to protect cells from the toxic effects of hydrogen peroxide. This chain is Catalase, found in Vibrio cholerae serotype O1 (strain ATCC 39315 / El Tor Inaba N16961).